The sequence spans 136 residues: Large ribosomal subunit protein bL12 (136 aa).

Belongs to the bacterial ribosomal protein bL12 family. In terms of assembly, homodimer. Part of the ribosomal stalk of the 50S ribosomal subunit. Forms a multimeric L10(L12)X complex, where L10 forms an elongated spine to which 2 to 4 L12 dimers bind in a sequential fashion. Binds GTP-bound translation factors.

Forms part of the ribosomal stalk which helps the ribosome interact with GTP-bound translation factors. Is thus essential for accurate translation. The chain is Large ribosomal subunit protein bL12 from Synechococcus sp. (strain JA-2-3B'a(2-13)) (Cyanobacteria bacterium Yellowstone B-Prime).